A 142-amino-acid polypeptide reads, in one-letter code: MQIKIIKLKEKAIIPKYEHDNDSGLDLVSTETVEIPSGESKLVKTGISIELPPNTEAQIRPRSGLALKHQITVLNTPGTIDEGYRGEIGVILINHGKRSFKVTEGMRIAQMVIAPVIRVKIQEVEQLSDTIRGQGGFGSTGV.

Substrate-binding positions include 62 to 64, Asn-75, and 79 to 81; these read RSG and TID.

It belongs to the dUTPase family. Mg(2+) is required as a cofactor.

It catalyses the reaction dUTP + H2O = dUMP + diphosphate + H(+). It functions in the pathway pyrimidine metabolism; dUMP biosynthesis; dUMP from dCTP (dUTP route): step 2/2. In terms of biological role, this enzyme is involved in nucleotide metabolism: it produces dUMP, the immediate precursor of thymidine nucleotides and it decreases the intracellular concentration of dUTP so that uracil cannot be incorporated into DNA. The polypeptide is Deoxyuridine 5'-triphosphate nucleotidohydrolase (Crocosphaera subtropica (strain ATCC 51142 / BH68) (Cyanothece sp. (strain ATCC 51142))).